Reading from the N-terminus, the 266-residue chain is GATA-type zinc finger protein 1 (266 aa).

Disordered stretches follow at residues 1-31, 106-129, and 171-191; these read MEAA…KSRP, TQCP…PRKQ, and CSQK…SSEA. The span at 106–121 shows a compositional bias: polar residues; it reads TQCPNLEISSATSPAS. The GATA-type zinc finger occupies 197–221; it reads CASCRTQRTPLWRDAEDGTPLCNAC.

As to expression, specifically expressed in adult testis and ovary. Expressed at high levels in the somatic cells of the developing gonads, including Leydig cells in the testes and granulosa cells in the ovaries.

The protein localises to the nucleus. Its function is as follows. Transcriptional regulator that plays a key role in germ cell development. Determines the oogenic fate by activating key genes for the oogenic program and meiotic prophase entry. Acts downstream of bone morphogenetic protein (BMP) by regulating expression of genes required for the oogenic programs, which are repressed by Polycomb activities in sexually uncommitted germ cells. Regulates expression of STRA8, a central downstream effector for the meiotic program. Acts independently of retinoic acid (RA). In males, not required for germ-cell sex determination, but required to allow the spermatogonia to efficiently accomplish the meiotic prophase. The sequence is that of GATA-type zinc finger protein 1 from Mus musculus (Mouse).